A 1520-amino-acid polypeptide reads, in one-letter code: Accessory colonization factor AcfD (1520 aa).

Residues 1-16 (MKIRIVSLIVLGFLIG) form the signal peptide. C17 carries N-palmitoyl cysteine lipidation. C17 carries the S-diacylglycerol cysteine lipid modification. The Peptidase M60 domain occupies 1085-1388 (GNRQPTGQWA…MFAQLKEWAE (304 aa)).

Its subcellular location is the cell membrane. In Vibrio cholerae serotype O1 (strain ATCC 39315 / El Tor Inaba N16961), this protein is Accessory colonization factor AcfD (acfD).